Here is a 156-residue protein sequence, read N- to C-terminus: Peroxisome assembly protein 22 (156 aa).

A helical transmembrane segment spans residues 24-46 (LSIIAVGVLSTVAVTVGYLLYLY).

The protein belongs to the peroxin-22 family.

It is found in the peroxisome membrane. Involved in peroxisome biogenesis. In Kluyveromyces lactis (strain ATCC 8585 / CBS 2359 / DSM 70799 / NBRC 1267 / NRRL Y-1140 / WM37) (Yeast), this protein is Peroxisome assembly protein 22 (PEX22).